The chain runs to 473 residues: Ral-GDS-related protein (473 aa).

The tract at residues 117-215 (EPNEAKPDDP…NQPSEELPDM (99 aa)) is disordered. Residues 134–157 (ALTMPALEPAPPLLADLGPALEPE) show a composition bias toward low complexity. The segment covering 173 to 185 (GPAPAPGEGPPPG) has biased composition (pro residues). The 253-residue stretch at 219–471 (PPRLLAEQLT…YKLSCQLEPE (253 aa)) folds into the Ras-GEF domain.

The protein resides in the cytoplasmic vesicle. The polypeptide is Ral-GDS-related protein (RGL4) (Homo sapiens (Human)).